The primary structure comprises 104 residues: L-rhamnose mutarotase (104 aa).

A substrate-binding site is contributed by Y18. The active-site Proton donor is H22. Substrate contacts are provided by residues Y41 and 76 to 77 (WW).

This sequence belongs to the rhamnose mutarotase family. In terms of assembly, homodimer.

Its subcellular location is the cytoplasm. It catalyses the reaction alpha-L-rhamnose = beta-L-rhamnose. It functions in the pathway carbohydrate metabolism; L-rhamnose metabolism. In terms of biological role, involved in the anomeric conversion of L-rhamnose. The sequence is that of L-rhamnose mutarotase from Clostridium beijerinckii (strain ATCC 51743 / NCIMB 8052) (Clostridium acetobutylicum).